We begin with the raw amino-acid sequence, 655 residues long: MSSNSYEVSIPMSKKLNGIPETTSKDLQTLTEGAVLSFHNICYRVKVKTGFLLCRKTIEKEILANINGVMKPGLNAILGPTGGGKSSLLDILAARKDPHGLSGDVLINGAPRPANFKCNSGYVVQDDVVMGTLTVRENLQFSAALRLPTTMTSYEKNERINKVIQELGLDKVADSKVGTQFIRGVSGGERKRTSIAMELITDPSILFLDEPTTGLDSSTANAVLLLLKRMSKQGRTIIFSIHQPRYSIFKLFDSLTLLASGRLMFHGPAQEALGYFGAIGFRCEPYNNPADFFLDIINGDSSAVVLNREDIGDEANETEEPSKKDTPLIEKLAEFYVNSSFFKETKVELDKFSGDQRRKKLPSYKEVTYATSFCHQLKWISRRSFKNLLGNPQASIAQLIVTVFLGLVIGAIFYDLKNDPAGIQNRAGVLFFLTTNQCFSSVSAVELLVVEKKLFIHEYISGYYRVSSYFFGKLLSDLLPMRMLPSIIFTCITYFLLGLKPKVEAFFIMMLTLMMVAYSASSMALAIAAGQSVVSIATLLMTISFVFMMIFSGLLVNLKTVVPWLSWLQYLSIPRYGYAALQHNEFLGQNFCPGLNVTTNNTCSYAICTGEEFLTNQGIDISPWGLWKNHVALACMIVIFLTIAYLKLLFLKKFS.

The Cytoplasmic segment spans residues Met-1–Ser-395. An ABC transporter domain is found at Leu-36–Pro-285. ATP is bound by residues Gly-79–Ser-86, Arg-183–Glu-189, Glu-210, and His-242. Residues Leu-389–Leu-651 enclose the ABC transmembrane type-2 domain. A helical membrane pass occupies residues Ile-396–Leu-416. The Extracellular portion of the chain corresponds to Lys-417 to Gly-428. A helical transmembrane segment spans residues Val-429 to Val-449. Topologically, residues Val-450–Asp-477 are cytoplasmic. Residues Leu-478–Gly-498 form a helical membrane-spanning segment. Residues Leu-499–Phe-506 lie on the Extracellular side of the membrane. A helical membrane pass occupies residues Phe-507 to Ile-527. The Cytoplasmic segment spans residues Ala-528–Ser-535. Residues Ile-536–Val-556 traverse the membrane as a helical segment. At Asn-557–His-630 the chain is on the extracellular side. Cys-592 and Cys-608 are joined by a disulfide. 2 N-linked (GlcNAc...) asparagine glycosylation sites follow: Asn-596 and Asn-600. The chain crosses the membrane as a helical span at residues Val-631 to Leu-651. Over Lys-652–Ser-655 the chain is Cytoplasmic.

The protein belongs to the ABC transporter superfamily. ABCG family. Eye pigment precursor importer (TC 3.A.1.204) subfamily. Homodimer; disulfide-linked. The minimal functional unit is a homodimer, but the major oligomeric form in plasma membrane is a homotetramer with possibility of higher order oligomerization up to homododecamers. In terms of processing, N-glycosylated. Glycosylation-deficient ABCG2 is normally expressed and functional. Post-translationally, phosphorylated. Phosphorylation may regulate the localization to the plasma membrane, the homooligomerization and therefore, the activity of the transporter.

The protein localises to the cell membrane. It is found in the apical cell membrane. The protein resides in the mitochondrion membrane. The enzyme catalyses ATP + H2O + xenobioticSide 1 = ADP + phosphate + xenobioticSide 2.. The catalysed reaction is urate(in) + ATP + H2O = urate(out) + ADP + phosphate + H(+). It catalyses the reaction indoxyl sulfate(in) + ATP + H2O = indoxyl sulfate(out) + ADP + phosphate + H(+). It carries out the reaction sphing-4-enine 1-phosphate(in) + ATP + H2O = sphing-4-enine 1-phosphate(out) + ADP + phosphate + H(+). The enzyme catalyses estrone 3-sulfate(in) + ATP + H2O = estrone 3-sulfate(out) + ADP + phosphate + H(+). The catalysed reaction is dehydroepiandrosterone 3-sulfate(in) + ATP + H2O = dehydroepiandrosterone 3-sulfate(out) + ADP + phosphate + H(+). It catalyses the reaction 4-methylumbelliferone sulfate(in) + ATP + H2O = 4-methylumbelliferone sulfate(out) + ADP + phosphate + H(+). It carries out the reaction 5,7-dimethyl-2-methylamino-4-(3-pyridylmethyl)-1,3-benzothiazol-6-yl beta-D-glucuronate(in) + ATP + H2O = 5,7-dimethyl-2-methylamino-4-(3-pyridylmethyl)-1,3-benzothiazol-6-yl beta-D-glucuronate(out) + ADP + phosphate + H(+). The enzyme catalyses 4-methylumbelliferone beta-D-glucuronate(in) + ATP + H2O = 4-methylumbelliferone beta-D-glucuronate(out) + ADP + phosphate + H(+). The catalysed reaction is 5,7-dimethyl-2-methylamino-4-(3-pyridylmethyl)-1,3-benzothiazol-6-yl sulfate(in) + ATP + H2O = 5,7-dimethyl-2-methylamino-4-(3-pyridylmethyl)-1,3-benzothiazol-6-yl sulfate(out) + ADP + phosphate + H(+). It catalyses the reaction 17beta-estradiol 17-O-(beta-D-glucuronate)(in) + ATP + H2O = 17beta-estradiol 17-O-(beta-D-glucuronate)(out) + ADP + phosphate + H(+). It carries out the reaction methotrexate(in) + ATP + H2O = methotrexate(out) + ADP + phosphate + H(+). The enzyme catalyses riboflavin(in) + ATP + H2O = riboflavin(out) + ADP + phosphate + H(+). The catalysed reaction is pheophorbide a(in) + ATP + H2O = pheophorbide a(out) + ADP + phosphate + H(+). It catalyses the reaction itaconate(in) + ATP + H2O = itaconate(out) + ADP + phosphate + H(+). Its function is as follows. Broad substrate specificity ATP-dependent transporter of the ATP-binding cassette (ABC) family that actively extrudes a wide variety of physiological compounds, dietary toxins and xenobiotics from cells. Involved in porphyrin homeostasis, mediating the export of protoporphyrin IX (PPIX) from both mitochondria to cytosol and cytosol to extracellular space, it also functions in the cellular export of heme. Also mediates the efflux of sphingosine-1-P from cells. Acts as a urate exporter functioning in both renal and extrarenal urate excretion. In kidney, it also functions as a physiological exporter of the uremic toxin indoxyl sulfate. Also involved in the excretion of steroids like estrone 3-sulfate/E1S, 3beta-sulfooxy-androst-5-en-17-one/DHEAS, and other sulfate conjugates. Mediates the secretion of the riboflavin and biotin vitamins into milk. Extrudes pheophorbide a, a phototoxic porphyrin catabolite of chlorophyll, reducing its bioavailability. Plays an important role in the exclusion of xenobiotics from the brain. It confers to cells a resistance to multiple drugs and other xenobiotics including mitoxantrone, pheophorbide, camptothecin, methotrexate, azidothymidine, and the anthracyclines daunorubicin and doxorubicin, through the control of their efflux. In placenta, it limits the penetration of drugs from the maternal plasma into the fetus. May play a role in early stem cell self-renewal by blocking differentiation. In inflammatory macrophages, exports itaconate from the cytosol to the extracellular compartment and limits the activation of TFEB-dependent lysosome biogenesis involved in antibacterial innate immune response. The protein is Broad substrate specificity ATP-binding cassette transporter ABCG2 (ABCG2) of Bos taurus (Bovine).